The chain runs to 263 residues: Probable 6-oxopurine nucleoside phosphorylase (263 aa).

Phosphate-binding positions include Thr9, Arg49 to His50, and Thr82 to Ala83. Met181 serves as a coordination point for substrate. Thr182 contacts phosphate. Asn205–Ala207 lines the substrate pocket.

It belongs to the PNP/MTAP phosphorylase family. MTAP subfamily. In terms of assembly, homohexamer. Dimer of a homotrimer.

The catalysed reaction is a purine D-ribonucleoside + phosphate = a purine nucleobase + alpha-D-ribose 1-phosphate. Its pathway is purine metabolism; purine nucleoside salvage. Its function is as follows. Purine nucleoside phosphorylase which is highly specific for 6-oxopurine nucleosides. Cleaves guanosine or inosine to respective bases and sugar-1-phosphate molecules. Involved in purine salvage. This chain is Probable 6-oxopurine nucleoside phosphorylase, found in Dictyoglomus turgidum (strain DSM 6724 / Z-1310).